The following is a 307-amino-acid chain: MTDLHYRCGWVALMGPPNAGKSTLLNALLGQKVTIVTPKPQTTRNQIVGILTDDDAQTIFMDTPGLTQVRGRLSKTMIQAVWQSLNQADIIMPVLDAHLYIRHPEFLDRDLAPVAQALASEERPMIVVVNKVDLFGDKSRMLPLLTRLHEMWPRADIFPISALHKDGLADLVELIRKKLPKGQAQFPEDQISTAPLRFMTAEIVREKLFMHLRQEVPYSVAVDVESWEEDEERGQTVIHATIYVARPMHKAMVIGRAGQSIKAIGTEARKDIQELVGGKVHLELWVKVREHWTEDTAFLRDLGLMAE.

The 175-residue stretch at 7 to 181 folds into the Era-type G domain; that stretch reads RCGWVALMGP…VELIRKKLPK (175 aa). Positions 15–22 are G1; that stretch reads GPPNAGKS. 15 to 22 serves as a coordination point for GTP; that stretch reads GPPNAGKS. The segment at 41–45 is G2; it reads QTTRN. The interval 62–65 is G3; sequence DTPG. GTP is bound by residues 62–66 and 130–133; these read DTPGL and NKVD. Positions 130-133 are G4; the sequence is NKVD. Residues 160–162 are G5; the sequence is ISA. The region spanning 212 to 290 is the KH type-2 domain; that stretch reads LRQEVPYSVA…HLELWVKVRE (79 aa).

The protein belongs to the TRAFAC class TrmE-Era-EngA-EngB-Septin-like GTPase superfamily. Era GTPase family. Monomer.

It is found in the cytoplasm. The protein localises to the cell inner membrane. In terms of biological role, an essential GTPase that binds both GDP and GTP, with rapid nucleotide exchange. Plays a role in 16S rRNA processing and 30S ribosomal subunit biogenesis and possibly also in cell cycle regulation and energy metabolism. The polypeptide is GTPase Era (Desulfovibrio desulfuricans (strain ATCC 27774 / DSM 6949 / MB)).